We begin with the raw amino-acid sequence, 323 residues long: Acetyl-coenzyme A carboxylase carboxyl transferase subunit alpha (323 aa).

The region spanning 39 to 293 (RLAGKSQQLT…KRSLAESLRQ (255 aa)) is the CoA carboxyltransferase C-terminal domain.

It belongs to the AccA family. Acetyl-CoA carboxylase is a heterohexamer composed of biotin carboxyl carrier protein (AccB), biotin carboxylase (AccC) and two subunits each of ACCase subunit alpha (AccA) and ACCase subunit beta (AccD).

The protein resides in the cytoplasm. It catalyses the reaction N(6)-carboxybiotinyl-L-lysyl-[protein] + acetyl-CoA = N(6)-biotinyl-L-lysyl-[protein] + malonyl-CoA. Its pathway is lipid metabolism; malonyl-CoA biosynthesis; malonyl-CoA from acetyl-CoA: step 1/1. Its function is as follows. Component of the acetyl coenzyme A carboxylase (ACC) complex. First, biotin carboxylase catalyzes the carboxylation of biotin on its carrier protein (BCCP) and then the CO(2) group is transferred by the carboxyltransferase to acetyl-CoA to form malonyl-CoA. The polypeptide is Acetyl-coenzyme A carboxylase carboxyl transferase subunit alpha (Cupriavidus necator (strain ATCC 17699 / DSM 428 / KCTC 22496 / NCIMB 10442 / H16 / Stanier 337) (Ralstonia eutropha)).